A 328-amino-acid polypeptide reads, in one-letter code: PhoH-like protein (328 aa).

Gly-135 to Thr-142 lines the ATP pocket.

Belongs to the PhoH family.

It is found in the cytoplasm. In Synechocystis sp. (strain ATCC 27184 / PCC 6803 / Kazusa), this protein is PhoH-like protein.